A 355-amino-acid chain; its full sequence is dTDP-D-glucose 4,6-dehydratase (355 aa).

Position 142 (Thr142) interacts with substrate. Residue Asp143 is the Proton donor of the active site. Catalysis depends on proton acceptor residues Glu144 and Tyr166.

This sequence belongs to the NAD(P)-dependent epimerase/dehydratase family. dTDP-glucose dehydratase subfamily. Requires NAD(+) as cofactor.

It catalyses the reaction dTDP-alpha-D-glucose = dTDP-4-dehydro-6-deoxy-alpha-D-glucose + H2O. This Mus musculus (Mouse) protein is dTDP-D-glucose 4,6-dehydratase (Tgds).